Here is a 149-residue protein sequence, read N- to C-terminus: uncharacterized protein (149 aa).

The protein to B.subtilis XkdN.

This is an uncharacterized protein from Bacillus subtilis (strain 168).